The following is a 180-amino-acid chain: Small ribosomal subunit protein uS4 (180 aa).

Positions 104–166 constitute an S4 RNA-binding domain; the sequence is RRLQTIVHRK…PTSPFKNNPP (63 aa). The tract at residues 155 to 180 is disordered; the sequence is FYPTSPFKNNPPTAGQGEVNVEQKGN.

It belongs to the universal ribosomal protein uS4 family. As to quaternary structure, part of the 30S ribosomal subunit. Contacts protein S5. The interaction surface between S4 and S5 is involved in control of translational fidelity.

In terms of biological role, one of the primary rRNA binding proteins, it binds directly to 16S rRNA where it nucleates assembly of the body of the 30S subunit. With S5 and S12 plays an important role in translational accuracy. This Metallosphaera sedula (strain ATCC 51363 / DSM 5348 / JCM 9185 / NBRC 15509 / TH2) protein is Small ribosomal subunit protein uS4.